Reading from the N-terminus, the 648-residue chain is NADP-dependent malic enzyme, chloroplastic (648 aa).

The transit peptide at 1–61 (MISLNSSFLE…VDSAVRDVNA (61 aa)) directs the protein to the chloroplast. The active-site Proton donor is Tyr195. Arg248 serves as a coordination point for NAD(+). The Proton acceptor role is filled by Lys266. Glu339, Asp340, and Asp363 together coordinate a divalent metal cation. Asp363 lines the NAD(+) pocket. NADP(+) is bound at residue 392–408 (LFLGAGEAGTGIAELIA). Asn504 lines the NAD(+) pocket.

It belongs to the malic enzymes family. As to quaternary structure, homotetramer. It depends on Mg(2+) as a cofactor. The cofactor is Mn(2+).

The protein resides in the plastid. It localises to the chloroplast. It carries out the reaction (S)-malate + NADP(+) = pyruvate + CO2 + NADPH. The enzyme catalyses oxaloacetate + H(+) = pyruvate + CO2. The protein operates within photosynthesis; C4 acid pathway. Its function is as follows. The chloroplastic ME isoform decarboxylates malate shuttled from neighboring mesophyll cells. The CO(2) released is then refixed by ribulose-bisphosphate carboxylase. This pathway eliminates the photorespiratory loss of CO(2) that occurs in most plants. The chain is NADP-dependent malic enzyme, chloroplastic (MOD1) from Flaveria trinervia (Clustered yellowtops).